Here is a 390-residue protein sequence, read N- to C-terminus: Ribosomal RNA small subunit methyltransferase H (390 aa).

S-adenosyl-L-methionine is bound by residues 47-49 (GGH), Asp66, Phe93, Asp122, and Gln129. The interval 282 to 390 (SKTPPGLPID…SHREDVEGEQ (109 aa)) is disordered. Over residues 305–316 (GSEKADEQENNK) the composition is skewed to basic and acidic residues. Over residues 348 to 358 (SGSSTTYSARS) the composition is skewed to polar residues. Composition is skewed to basic and acidic residues over residues 360–372 (SRHE…REHL) and 381–390 (SHREDVEGEQ).

This sequence belongs to the methyltransferase superfamily. RsmH family.

It is found in the cytoplasm. The catalysed reaction is cytidine(1402) in 16S rRNA + S-adenosyl-L-methionine = N(4)-methylcytidine(1402) in 16S rRNA + S-adenosyl-L-homocysteine + H(+). In terms of biological role, specifically methylates the N4 position of cytidine in position 1402 (C1402) of 16S rRNA. The chain is Ribosomal RNA small subunit methyltransferase H from Corynebacterium kroppenstedtii (strain DSM 44385 / JCM 11950 / CIP 105744 / CCUG 35717).